The primary structure comprises 507 residues: Chromosomal replication initiator protein DnaA (507 aa).

The interval 1–112 (MTDDPGSGFT…PATDEADDTT (112 aa)) is domain I, interacts with DnaA modulators. Positions 99–162 (RIAPPATDEA…ERPRNTDSAT (64 aa)) are disordered. Residues 113–127 (VPPSENPATTSPDTT) are compositionally biased toward polar residues. A domain II region spans residues 113–166 (VPPSENPATTSPDTTTDNDEIDDSAAARGDNQHSWPSYFTERPRNTDSATAGVT). The segment at 167–383 (SLNRRYTFDT…GALIRVTAFA (217 aa)) is domain III, AAA+ region. ATP is bound by residues glycine 211, glycine 213, lysine 214, and threonine 215. Residues 384–507 (SLNKTPIDKA…TTRIRQRSKR (124 aa)) form a domain IV, binds dsDNA region.

It belongs to the DnaA family. As to quaternary structure, oligomerizes as a right-handed, spiral filament on DNA at oriC.

It localises to the cytoplasm. In terms of biological role, plays an essential role in the initiation and regulation of chromosomal replication. ATP-DnaA binds to the origin of replication (oriC) to initiate formation of the DNA replication initiation complex once per cell cycle. Binds the DnaA box (a 9 base pair repeat at the origin) and separates the double-stranded (ds)DNA. Forms a right-handed helical filament on oriC DNA; dsDNA binds to the exterior of the filament while single-stranded (ss)DNA is stabiized in the filament's interior. The ATP-DnaA-oriC complex binds and stabilizes one strand of the AT-rich DNA unwinding element (DUE), permitting loading of DNA polymerase. After initiation quickly degrades to an ADP-DnaA complex that is not apt for DNA replication. Binds acidic phospholipids. In Mycobacterium bovis (strain BCG / Tokyo 172 / ATCC 35737 / TMC 1019), this protein is Chromosomal replication initiator protein DnaA.